The chain runs to 543 residues: Hydroxylamine reductase (543 aa).

C5, C8, C17, and C23 together coordinate [4Fe-4S] cluster. 8 residues coordinate hybrid [4Fe-2O-2S] cluster: H236, E260, C304, C398, C426, C451, E486, and K488. Position 398 is a cysteine persulfide (C398).

Belongs to the HCP family. Requires [4Fe-4S] cluster as cofactor. The cofactor is hybrid [4Fe-2O-2S] cluster.

The protein localises to the cytoplasm. The catalysed reaction is A + NH4(+) + H2O = hydroxylamine + AH2 + H(+). Catalyzes the reduction of hydroxylamine to form NH(3) and H(2)O. This Bacteroides fragilis (strain ATCC 25285 / DSM 2151 / CCUG 4856 / JCM 11019 / LMG 10263 / NCTC 9343 / Onslow / VPI 2553 / EN-2) protein is Hydroxylamine reductase.